A 266-amino-acid chain; its full sequence is MAFTGKRLKGLIAATFTPMTPNSDINLLVIEQYVDYLVQKQHIRNIFVNGTTGEGMSLSICERKRLTEEWVKHARGKMDNVIVHVGCLGLSDSKDLAAHAASCGADAISAVCPSFLKPANLDALVLYLKDVASAAPSLPFYYYHIPKLTGITYQIYELLGKVKENIPSFRGVKFSDVNLMDFSLCVSEYKEFDCLYGVDEQLLGALAFGAHGAVGSTYNYLGNKNGDMLEAFEAGNLQKARKIQCSLQEFLYFVFDMAHFSGSKAN.

Aceneuramate-binding residues include Thr-51 and Thr-52. Tyr-143 (proton donor) is an active-site residue. Catalysis depends on Lys-173, which acts as the Schiff-base intermediate with substrate. Aceneuramate contacts are provided by Ser-175, Gly-197, Asp-199, Glu-200, and Ser-216.

The protein belongs to the DapA family. NanA subfamily. In terms of assembly, homotetramer.

The protein localises to the cytoplasm. It carries out the reaction aceneuramate = aldehydo-N-acetyl-D-mannosamine + pyruvate. It functions in the pathway amino-sugar metabolism; N-acetylneuraminate degradation. Its function is as follows. Catalyzes the cleavage of N-acetylneuraminic acid (sialic acid) to form pyruvate and N-acetylmannosamine via a Schiff base intermediate. It prevents sialic acids from being recycled and returning to the cell surface. Involved in the N-glycolylneuraminic acid (Neu5Gc) degradation pathway. The sequence is that of N-acetylneuraminate lyase B (npl-b) from Xenopus laevis (African clawed frog).